A 292-amino-acid chain; its full sequence is Ribosomal protein L11 methyltransferase (292 aa).

Thr136, Gly159, Asp181, and Asn228 together coordinate S-adenosyl-L-methionine.

This sequence belongs to the methyltransferase superfamily. PrmA family.

It is found in the cytoplasm. It catalyses the reaction L-lysyl-[protein] + 3 S-adenosyl-L-methionine = N(6),N(6),N(6)-trimethyl-L-lysyl-[protein] + 3 S-adenosyl-L-homocysteine + 3 H(+). Functionally, methylates ribosomal protein L11. The sequence is that of Ribosomal protein L11 methyltransferase from Rhizobium johnstonii (strain DSM 114642 / LMG 32736 / 3841) (Rhizobium leguminosarum bv. viciae).